A 642-amino-acid polypeptide reads, in one-letter code: 2-oxoacid:ferredoxin oxidoreductase 2, subunit alpha (642 aa).

A YPITP motif motif is present at residues Tyr-263–Pro-267. 2 residues coordinate substrate: Thr-266 and Arg-356.

As to quaternary structure, heterodimer composed of an alpha and a beta subunit.

The catalysed reaction is a 2-oxocarboxylate + 2 oxidized [2Fe-2S]-[ferredoxin] + CoA = an acyl-CoA + 2 reduced [2Fe-2S]-[ferredoxin] + CO2 + H(+). Its function is as follows. Catalyzes the coenzyme A-dependent oxidative decarboxylation of different 2-oxoacids such as pyruvate, 2-oxobutyrate, glyoxylate and 2-oxoglutarate to form their CoA derivatives. The chain is 2-oxoacid:ferredoxin oxidoreductase 2, subunit alpha from Aeropyrum pernix (strain ATCC 700893 / DSM 11879 / JCM 9820 / NBRC 100138 / K1).